Here is a 120-residue protein sequence, read N- to C-terminus: MASRKEALARRANRVRRQLKSVANGRPRLSVHRSSKNIYVQVIDDAAGKTLASASTLDKDLRGSLKTGADTAAAALVGKLVAERATKAGVKEVVFDRGAFIYHGRIKALAEAAREGGLSF.

Belongs to the universal ribosomal protein uL18 family. As to quaternary structure, part of the 50S ribosomal subunit; part of the 5S rRNA/L5/L18/L25 subcomplex. Contacts the 5S and 23S rRNAs.

In terms of biological role, this is one of the proteins that bind and probably mediate the attachment of the 5S RNA into the large ribosomal subunit, where it forms part of the central protuberance. In Rhizobium rhizogenes (strain K84 / ATCC BAA-868) (Agrobacterium radiobacter), this protein is Large ribosomal subunit protein uL18.